Reading from the N-terminus, the 361-residue chain is Peptide chain release factor 1 (361 aa).

At Gln240 the chain carries N5-methylglutamine.

Belongs to the prokaryotic/mitochondrial release factor family. In terms of processing, methylated by PrmC. Methylation increases the termination efficiency of RF1.

The protein localises to the cytoplasm. Functionally, peptide chain release factor 1 directs the termination of translation in response to the peptide chain termination codons UAG and UAA. This Mycobacterium leprae (strain Br4923) protein is Peptide chain release factor 1.